Here is a 240-residue protein sequence, read N- to C-terminus: MAYKREKGLLYVVATPIGNMGDITLRAIDVLKEVDLVLCESAKETKSLFHKLGISTPVLALYKDHSETPFANVLEQLKQGKSMALVSDAGTPGVSDPGSQMVRTARENGISIVPVPGASALTALLSVSGFQVNPTYFLGFLSEKPSKKRRELERAREIEGLIVFYESVHKLPRLYPILEELFPETEVLMGRELTKAFEEVVYYANPRELANNPPNAKGEFVFLLNHRKKSLKGNSDSTDM.

The protein belongs to the methyltransferase superfamily. RsmI family.

It is found in the cytoplasm. It carries out the reaction cytidine(1402) in 16S rRNA + S-adenosyl-L-methionine = 2'-O-methylcytidine(1402) in 16S rRNA + S-adenosyl-L-homocysteine + H(+). Catalyzes the 2'-O-methylation of the ribose of cytidine 1402 (C1402) in 16S rRNA. The polypeptide is Ribosomal RNA small subunit methyltransferase I (Leptospira biflexa serovar Patoc (strain Patoc 1 / ATCC 23582 / Paris)).